A 219-amino-acid chain; its full sequence is NADH-quinone oxidoreductase subunit C (219 aa).

It belongs to the complex I 30 kDa subunit family. In terms of assembly, NDH-1 is composed of 14 different subunits. Subunits NuoB, C, D, E, F, and G constitute the peripheral sector of the complex.

It localises to the cell inner membrane. It carries out the reaction a quinone + NADH + 5 H(+)(in) = a quinol + NAD(+) + 4 H(+)(out). Functionally, NDH-1 shuttles electrons from NADH, via FMN and iron-sulfur (Fe-S) centers, to quinones in the respiratory chain. The immediate electron acceptor for the enzyme in this species is believed to be ubiquinone. Couples the redox reaction to proton translocation (for every two electrons transferred, four hydrogen ions are translocated across the cytoplasmic membrane), and thus conserves the redox energy in a proton gradient. The sequence is that of NADH-quinone oxidoreductase subunit C from Methylorubrum populi (strain ATCC BAA-705 / NCIMB 13946 / BJ001) (Methylobacterium populi).